The primary structure comprises 171 residues: 3-hydroxydecanoyl-[acyl-carrier-protein] dehydratase (171 aa).

His70 is an active-site residue.

The protein belongs to the thioester dehydratase family. FabA subfamily. As to quaternary structure, homodimer.

The protein resides in the cytoplasm. The enzyme catalyses a (3R)-hydroxyacyl-[ACP] = a (2E)-enoyl-[ACP] + H2O. It catalyses the reaction (3R)-hydroxydecanoyl-[ACP] = (2E)-decenoyl-[ACP] + H2O. The catalysed reaction is (2E)-decenoyl-[ACP] = (3Z)-decenoyl-[ACP]. The protein operates within lipid metabolism; fatty acid biosynthesis. Necessary for the introduction of cis unsaturation into fatty acids. Catalyzes the dehydration of (3R)-3-hydroxydecanoyl-ACP to E-(2)-decenoyl-ACP and then its isomerization to Z-(3)-decenoyl-ACP. Can catalyze the dehydratase reaction for beta-hydroxyacyl-ACPs with saturated chain lengths up to 16:0, being most active on intermediate chain length. This chain is 3-hydroxydecanoyl-[acyl-carrier-protein] dehydratase, found in Shewanella frigidimarina (strain NCIMB 400).